The sequence spans 875 residues: MSKSTAEIRQAFLDFFHSKGHQVVASSSLVPHNDPTLLFTNAGMNQFKDVFLGLDKRNYSRATTAQRCVRAGGKHNDLENVGYTARHHTFFEMLGNFSFGDYFKQDAIKYAWELLTGENWFALPKEKLWVTVYETDDEAFDIWANEVGVPRERIIRIGDNKGAPFASDNFWQMGDTGPCGPCTEIFFDHGDHIWGGPPGSPEEDGDRYIEIWNIVFMQFNRQADGTMEPLPKPSVDTGMGLERIAAVLQHVNSNYDIDLFRDLIASVAKVTGATDLTNKSLRVIADHIRSCAFLVADGVIPSNENRGYVLRRIIRRAIRHGNMLGAKDTFFWKLVAPLIDVMGSAGDELKQQQAQVEQVLKTEEEQFARTLERGLALLDEELSKLKGDTLDGETAFRLYDTYGFPVDLTADVCRERNIKVDEAGFEAAMEEQRRRARESSGFGADYNAMIRVDGASEFKGYDHLELNGKVTALFIDGKAVDSVSAGQEAVVILDQTPFYAESGGQVGDKGELKGAGFSFAVSDTQKYGQAIGHIGKVASGSLKVGDAVQADVDEARRHRIRLNHSATHLMHAALRQVLGTHVAQKGSLVNDKALRFDFSHFEAMKPEEIRAVEDLVNAQIRRNLAIETNIMDIDAARASGAMALFGEKYDDRVRVLRMGDFSTELCGGTHAARTGDIGLFRITSESGTAAGVRRIEAVTGEGAMAILHAQSDQLNDIAQLLKGDSHNLGEKVRAALERTRQLEKELQQLKEQAAAQESANLSSKAEEINGVKLLVSELTGVEPKMLRTMVDDLKNQLGSTIVVLATVADGKVSLIAGVSKDVTDRVKAGELVGMVAQQVGGKGGGRPDMAQAGGTDASALPAALASVKGWVSAKL.

Zn(2+) is bound by residues His-564, His-568, Cys-666, and His-670.

It belongs to the class-II aminoacyl-tRNA synthetase family. Homotetramer. It depends on Zn(2+) as a cofactor.

The protein resides in the cytoplasm. The enzyme catalyses tRNA(Ala) + L-alanine + ATP = L-alanyl-tRNA(Ala) + AMP + diphosphate. Catalyzes the attachment of alanine to tRNA(Ala) in a two-step reaction: alanine is first activated by ATP to form Ala-AMP and then transferred to the acceptor end of tRNA(Ala). Also edits incorrectly charged Ser-tRNA(Ala) and Gly-tRNA(Ala) via its editing domain. The protein is Alanine--tRNA ligase of Klebsiella pneumoniae subsp. pneumoniae (strain ATCC 700721 / MGH 78578).